The primary structure comprises 90 residues: Probable Fe(2+)-trafficking protein (90 aa).

The protein belongs to the Fe(2+)-trafficking protein family.

Its function is as follows. Could be a mediator in iron transactions between iron acquisition and iron-requiring processes, such as synthesis and/or repair of Fe-S clusters in biosynthetic enzymes. The polypeptide is Probable Fe(2+)-trafficking protein (Polaromonas sp. (strain JS666 / ATCC BAA-500)).